The sequence spans 93 residues: MTDALGSIDMPDAEDETREKKARKGGKRGKKGPLGRLALFYRQIVAELRKVVWPTRNQLTTYTTVVIVFVVIMIGLVTVIDFGFEKAIKFVFG.

Residues 1 to 33 (MTDALGSIDMPDAEDETREKKARKGGKRGKKGP) form a disordered region. Residues 20–33 (KKARKGGKRGKKGP) show a composition bias toward basic residues. Residues 64-84 (TVVIVFVVIMIGLVTVIDFGF) traverse the membrane as a helical segment.

The protein belongs to the SecE/SEC61-gamma family. In terms of assembly, component of the Sec protein translocase complex. Heterotrimer consisting of SecY, SecE and SecG subunits. The heterotrimers can form oligomers, although 1 heterotrimer is thought to be able to translocate proteins. Interacts with the ribosome. Interacts with SecDF, and other proteins may be involved. Interacts with SecA.

Its subcellular location is the cell membrane. Essential subunit of the Sec protein translocation channel SecYEG. Clamps together the 2 halves of SecY. May contact the channel plug during translocation. This is Protein translocase subunit SecE from Streptomyces virginiae (Streptomyces cinnamonensis).